Here is a 612-residue protein sequence, read N- to C-terminus: MIVDNSKDFDLKSFLANLTTHSGVYRMLDKHGEIIYVGKAKNLKNRINSYFSKGAKDSKTLMMVEQIARIEITITPSDYEAYLLENNLIKQHRPKYNILFKDDKSYPYLVISRDKFPRVSFYRGKSAYKKGQCFGPYVSISSVKNTLNTIQKIFPIRQCENSYYKSRVRPCLQYQIKRCLAPCVGLVSQQQYDEQLAILKKFLAGKFSSVLEEISAKMYQASEDMEYEKAQVYRDQLVVLRKLQQQQIVDIQEDKTFDVIGIYMQDSYASIALLQIQNGDVVADRHWSIDAKGQDKTSIMHAFLSHFYLGDEIRNIWPKNIILSKVEFADITDLMNSISQKIGQAINWIIAPAADNLKWLKLAEVNARQKLNIYTSSKSQYQKRLESLKEFLESEKDIKRIECFDISHFQGEATIASCVVYTDDGEDRKSHRRYNIKDIKSGDDYAAIHQAVSRRVSSGLEADNLPDVMIIDGGKGQIHQAEAVFREYGIQDKVQLVSLGKGVERISGKEKIYKGFDDTEYTLDEHNPGFLLLRQVRDSAHDHAIKGQRKKVSANRQSSIIEEIEGVGPKRRKALMMYFGGWQELSRASVDEIAKVKGISKKLAQEIWECFH.

The GIY-YIG domain maps to 20–98; the sequence is THSGVYRMLD…IKQHRPKYNI (79 aa). Residues 208–243 enclose the UVR domain; it reads SSVLEEISAKMYQASEDMEYEKAQVYRDQLVVLRKL.

Belongs to the UvrC family. In terms of assembly, interacts with UvrB in an incision complex.

It is found in the cytoplasm. The UvrABC repair system catalyzes the recognition and processing of DNA lesions. UvrC both incises the 5' and 3' sides of the lesion. The N-terminal half is responsible for the 3' incision and the C-terminal half is responsible for the 5' incision. This is UvrABC system protein C from Francisella tularensis subsp. holarctica (strain FTNF002-00 / FTA).